Reading from the N-terminus, the 234-residue chain is Leucyl/phenylalanyl-tRNA--protein transferase (234 aa).

This sequence belongs to the L/F-transferase family.

Its subcellular location is the cytoplasm. It catalyses the reaction N-terminal L-lysyl-[protein] + L-leucyl-tRNA(Leu) = N-terminal L-leucyl-L-lysyl-[protein] + tRNA(Leu) + H(+). The enzyme catalyses N-terminal L-arginyl-[protein] + L-leucyl-tRNA(Leu) = N-terminal L-leucyl-L-arginyl-[protein] + tRNA(Leu) + H(+). The catalysed reaction is L-phenylalanyl-tRNA(Phe) + an N-terminal L-alpha-aminoacyl-[protein] = an N-terminal L-phenylalanyl-L-alpha-aminoacyl-[protein] + tRNA(Phe). Functionally, functions in the N-end rule pathway of protein degradation where it conjugates Leu, Phe and, less efficiently, Met from aminoacyl-tRNAs to the N-termini of proteins containing an N-terminal arginine or lysine. The polypeptide is Leucyl/phenylalanyl-tRNA--protein transferase (Pectobacterium atrosepticum (strain SCRI 1043 / ATCC BAA-672) (Erwinia carotovora subsp. atroseptica)).